A 359-amino-acid polypeptide reads, in one-letter code: Mitochondrial glutathione transporter SLC25A39 (359 aa).

The Mitochondrial intermembrane segment spans residues 1–14; that stretch reads MADQDPAGISPLQQ. 3 Solcar repeats span residues 9–151, 159–243, and 253–347; these read ISPL…LKAF, SDLY…VKSW, and TSVG…GKSF. A helical membrane pass occupies residues 15–35; the sequence is MVASGTGAVVTSLFMTPLDVV. Topologically, residues 36–121 are mitochondrial matrix; that stretch reads KVRLQSQRPS…VKIVRHEGTR (86 aa). 4 residues coordinate [2Fe-2S] cluster: C74, C78, C88, and C94. Residues 122 to 142 form a helical membrane-spanning segment; sequence TLWSGLPATLVMTVPATAIYF. Residues 143–160 lie on the Mitochondrial intermembrane side of the membrane; it reads TAYDQLKAFLCGRALTSD. The helical transmembrane segment at 161-181 threads the bilayer; sequence LYAPMVAGALARLGTVTVISP. Over 182 to 214 the chain is Mitochondrial matrix; that stretch reads LELMRTKLQAQHVSYRELGACVRTAVAQGGWRS. Residues 215–235 traverse the membrane as a helical segment; sequence LWLGWGPTALRDVPFSALYWF. Topologically, residues 236 to 258 are mitochondrial intermembrane; it reads NYELVKSWLNGFRPKDQTSVGMS. Residues 259–279 form a helical membrane-spanning segment; the sequence is FVAGGISGTVAAVLTLPFDVV. Residues 280–317 lie on the Mitochondrial matrix side of the membrane; that stretch reads KTQRQVALGAMEAVRVNPLHVDSTWLLLRRIRAESGTK. The chain crosses the membrane as a helical span at residues 318-338; it reads GLFAGFLPRIIKAAPSCAIMI. The Mitochondrial intermembrane portion of the chain corresponds to 339-359; that stretch reads STYEFGKSFFQRLNQDRLLGG.

This sequence belongs to the mitochondrial carrier (TC 2.A.29) family. Cleaved and degraded by AFG3L2; degradation by AFG3L2 is regulated by the ability of SLC25A39 to bind iron-sulfur. In absence of mitochondrial glutathione, SLC25A39 binds iron-sulfur, preventing cleavage and degradation by AFG3L2. The presence of mitochondrial glutathione prevents iron-sulfur-binding to SLC25A39, promoting cleavage and degradation by AFG3L2. As to expression, expressed in many tissues. Abundant in testis and kidney.

It is found in the mitochondrion inner membrane. It catalyses the reaction glutathione(in) = glutathione(out). With respect to regulation, the activity of SLC25A39 is regulated by levels of mitochondrial glutathione via its ability to bind [2Fe-2S] iron-sulfur cluster. Upon physiological levels of mitochondrial glutathione, glutathione prevents iron-sulfur-binding to SLC25A39 promoting cleavage and degradation by AFG3L2. Upon depletion of mitochondrial glutathione, SLC25A39 binds iron-sulfur, preventing cleavage and degradation by AFG3L2. Its function is as follows. Mitochondrial transporter required for glutathione import into mitochondria. Glutathione, which plays key roles in oxidative metabolism, is produced exclusively in the cytosol and is imported in many organelles. Mitochondrial glutathione is required for the activity and stability of proteins containing iron-sulfur clusters, as well as erythropoiesis. This Homo sapiens (Human) protein is Mitochondrial glutathione transporter SLC25A39.